We begin with the raw amino-acid sequence, 398 residues long: Serpin-Z2A (398 aa).

The interval 343–367 (GTEAAAATIAKAVLLSASPPSDMDF) is RCL.

This sequence belongs to the serpin family.

Inhibits chymotrypsin and cathepsin G in vitro. This chain is Serpin-Z2A, found in Triticum aestivum (Wheat).